Here is a 299-residue protein sequence, read N- to C-terminus: tRNA pseudouridine synthase B (299 aa).

Asp-39 (nucleophile) is an active-site residue.

Belongs to the pseudouridine synthase TruB family. Type 1 subfamily.

The catalysed reaction is uridine(55) in tRNA = pseudouridine(55) in tRNA. In terms of biological role, responsible for synthesis of pseudouridine from uracil-55 in the psi GC loop of transfer RNAs. This Syntrophomonas wolfei subsp. wolfei (strain DSM 2245B / Goettingen) protein is tRNA pseudouridine synthase B.